A 273-amino-acid polypeptide reads, in one-letter code: Secretory carrier-associated membrane protein 6 (273 aa).

The interval 1 to 69 (MHHDPNPFDE…MGDSKSKARE (69 aa)) is disordered. Residues 1–131 (MHHDPNPFDE…LQKLQYLAFA (131 aa)) are Cytoplasmic-facing. Residues 20–30 (NGGGGGGGGGS) are compositionally biased toward gly residues. A coiled-coil region spans residues 68–94 (RELSSWETDLKRREADIKRREEALRNA). 4 helical membrane-spanning segments follow: residues 132–152 (SWLG…VCWI), 159–179 (LFFL…LIWY), 194–214 (FGWF…AAIA), and 239–259 (IIGI…LLSI). Over 260 to 273 (GVLQRVYMYFRGNK) the chain is Cytoplasmic.

The protein belongs to the SCAMP family.

It localises to the cell membrane. The protein resides in the cytoplasmic vesicle. It is found in the secretory vesicle membrane. Its function is as follows. Probably involved in membrane trafficking. This is Secretory carrier-associated membrane protein 6 (SCAMP6) from Oryza sativa subsp. japonica (Rice).